The chain runs to 216 residues: MDANKMIINLAVLGKTQSGKSSAGNVLLGSADFYSRFAPGSVTKDCSLGRSCHIHGFMRRGGHEISLQIQVLDTPGYPHSKLSTRCVKQEVKKALEHHFGQEGLHLALLVHRADMPFFGQEASDSVQLIQELLGDSWKNYTAILFTHAEKIKEAGLSEEEYLCEASDALLTLLNSVQHRHIFLYERGNSWSEQRIKILERIMEFIKENHFQVLSFT.

The region spanning 5–216 (KMIINLAVLG…ENHFQVLSFT (212 aa)) is the AIG1-type G domain. GTP-binding positions include 14-22 (GKTQSGKSS), Ser35, and 147-149 (HAE).

This sequence belongs to the TRAFAC class TrmE-Era-EngA-EngB-Septin-like GTPase superfamily. AIG1/Toc34/Toc159-like paraseptin GTPase family. IAN subfamily.

The protein is GTPase IMAP family member GIMD1 (Gimd1) of Rattus norvegicus (Rat).